Reading from the N-terminus, the 447-residue chain is MANSITADEIREQFSQAMSAMYQQEVPQYGTLLELVADVNLAVLENNPQLHEKMVNADELARLNVERHGAIRVGTAQELATLRRMFAIMGMYPVSYYDLSQAGVPVHSTAFRPIDDASLARNPFRVFTSLLRLELIENEILRQKAAEILRQRDIFTPRCRQLLEEYEQQGGFNETQAQEFVQEALETFRWHQSATVDEETYRALHNEHRLIADVVCFPGCHINHLTPRTLDIDRVQSMMPECGIEPKILIEGPPRREVPILLRQTSFKALEETVLFAGQKQGTHTARFGEIEQRGVALTPKGRQLYDDLLRNAGTGQDNLTHQMHLQETFRTFPDSEFLMRQQGLAWFRYRLTPSGEAHRQAIHPGDDPQPLIERGWVVAQPITYEDFLPVSAAGIFQSNLGNETQTRSHGNASREAFEQALGCPVLDEFQLYQEAEERSKRRCGLL.

Residues His68, Arg72, and His224 each contribute to the 2-oxoadipate site. His68 serves as a coordination point for Fe(2+). The Fe(2+) site is built by His224 and Glu290. Val391 serves as a coordination point for 2-oxoadipate.

This sequence belongs to the 2-oxoadipate dioxygenase/decarboxylase family. It depends on Fe(2+) as a cofactor.

The catalysed reaction is 2-oxoadipate + O2 = (R)-2-hydroxyglutarate + CO2. Its function is as follows. Catalyzes the decarboxylation and hydroxylation of 2-oxoadipate (2OA) to form D-2-hydroxyglutarate (D-2-HGA). This chain is 2-oxoadipate dioxygenase/decarboxylase (ydcJ), found in Escherichia coli (strain K12).